The primary structure comprises 77 residues: Probable [Fe-S]-dependent transcriptional repressor (77 aa).

Positions 54, 59, 62, and 68 each coordinate iron-sulfur cluster.

This sequence belongs to the FeoC family.

Its function is as follows. May function as a transcriptional regulator that controls feoABC expression. The sequence is that of Probable [Fe-S]-dependent transcriptional repressor from Proteus mirabilis (strain HI4320).